A 226-amino-acid polypeptide reads, in one-letter code: Neuron-specific vesicular protein calcyon (226 aa).

Residues 1–21 (MVKLGCSFSGKPGKEAGDQDG) are disordered. Topologically, residues 1-88 (MVKLGCSFSG…EEGRRLPTAR (88 aa)) are extracellular. The helical transmembrane segment at 89–109 (MIAFAMALLGCVLIMYKAIWY) threads the bilayer. At 110-226 (DQFTCPDGFL…AEGVPSQPPK (117 aa)) the chain is on the cytoplasmic side. Positions 177 to 226 (HKGTTPAAMAVSTAAAAAAAEGTEPSGKSLDTREKEDPQKAEGVPSQPPK) are disordered. Low complexity predominate over residues 183-196 (AAMAVSTAAAAAAA). Over residues 206–216 (LDTREKEDPQK) the composition is skewed to basic and acidic residues.

Belongs to the NSG family. In terms of assembly, interacts with CLTA. Most abundant in brain. Also expressed in testis and ovary and, at much lower levels, in kidney and heart.

Its subcellular location is the cytoplasmic vesicle membrane. It localises to the cell membrane. In terms of biological role, interacts with clathrin light chain A and stimulates clathrin self-assembly and clathrin-mediated endocytosis. The polypeptide is Neuron-specific vesicular protein calcyon (Caly) (Mus musculus (Mouse)).